Consider the following 262-residue polypeptide: 4-hydroxy-2-oxo-heptane-1,7-dioate aldolase (262 aa).

The active-site Proton acceptor is the His-45. Gln-147 provides a ligand contact to substrate. Glu-149 provides a ligand contact to a divalent metal cation. Substrate-binding residues include Ala-174 and Asp-175. Asp-175 is a binding site for a divalent metal cation.

This sequence belongs to the HpcH/HpaI aldolase family. In terms of assembly, homohexamer; trimer of dimers. It depends on a divalent metal cation as a cofactor.

It carries out the reaction 4-hydroxy-2-oxoheptanedioate = succinate semialdehyde + pyruvate. The catalysed reaction is D-glyceraldehyde + 3-hydroxypyruvate = (3R,4S,5R)-3,4,5,6-tetrahydroxy-2-oxohexanoate. The enzyme catalyses D-glyceraldehyde + 3-hydroxypyruvate = 2-dehydro-D-gluconate. It catalyses the reaction D-glyceraldehyde + 3-hydroxypyruvate = 2-dehydro-D-galactonate. It carries out the reaction D-glyceraldehyde + pyruvate = 2-dehydro-3-deoxy-L-galactonate. The catalysed reaction is 2-dehydro-3-deoxy-D-gluconate = D-glyceraldehyde + pyruvate. Its pathway is aromatic compound metabolism; 4-hydroxyphenylacetate degradation; pyruvate and succinate semialdehyde from 4-hydroxyphenylacetate: step 7/7. In terms of biological role, catalyzes the reversible retro-aldol cleavage of 4-hydroxy-2-ketoheptane-1,7-dioate (HKHD) to pyruvate and succinic semialdehyde. In vitro, can catalyze the aldolisation reaction between hydroxypyruvate (HPA) or pyruvate (PA) and D-glyceraldehyde (D-GA). The condensation of hydroxypyruvate and D-glyceraldehyde produces (3R,4S,5R)-3,4,5,6-tetrahydroxy-2-oxohexanoate as the major product, 2-dehydro-D-gluconate and 2-dehydro-D-galactonate. The condensation of pyruvate and D-glyceraldehyde produces 2-dehydro-3-deoxy-L-galactonate as the major product and 2-dehydro-3-deoxy-D-gluconate. The protein is 4-hydroxy-2-oxo-heptane-1,7-dioate aldolase of Escherichia coli (strain ATCC 8739 / DSM 1576 / NBRC 3972 / NCIMB 8545 / WDCM 00012 / Crooks).